A 267-amino-acid chain; its full sequence is UPF0328 protein ECU06_0070 (267 aa).

Belongs to the UPF0328 family.

This chain is UPF0328 protein ECU06_0070, found in Encephalitozoon cuniculi (strain GB-M1) (Microsporidian parasite).